The following is a 388-amino-acid chain: 3-dehydroquinate synthase (388 aa).

NAD(+) is bound by residues 85–90 (DGEQYK), 119–123 (GVIGD), 143–144 (TT), K156, K165, and 183–186 (TLKT). 3 residues coordinate Zn(2+): E198, H261, and H278.

The protein belongs to the sugar phosphate cyclases superfamily. Dehydroquinate synthase family. Co(2+) is required as a cofactor. The cofactor is Zn(2+). Requires NAD(+) as cofactor.

The protein resides in the cytoplasm. It catalyses the reaction 7-phospho-2-dehydro-3-deoxy-D-arabino-heptonate = 3-dehydroquinate + phosphate. It participates in metabolic intermediate biosynthesis; chorismate biosynthesis; chorismate from D-erythrose 4-phosphate and phosphoenolpyruvate: step 2/7. Functionally, catalyzes the conversion of 3-deoxy-D-arabino-heptulosonate 7-phosphate (DAHP) to dehydroquinate (DHQ). This chain is 3-dehydroquinate synthase, found in Psychrobacter arcticus (strain DSM 17307 / VKM B-2377 / 273-4).